Consider the following 345-residue polypeptide: L-threonine 3-dehydrogenase (345 aa).

Residue Cys-42 coordinates Zn(2+). Residues Thr-44 and His-47 each act as charge relay system in the active site. Positions 67, 68, 97, 100, 103, and 111 each coordinate Zn(2+). Residues Ile-179, Asp-199, Arg-204, 266–268 (LGI), and 290–291 (IY) each bind NAD(+).

This sequence belongs to the zinc-containing alcohol dehydrogenase family. As to quaternary structure, homotetramer. Zn(2+) is required as a cofactor.

The protein resides in the cytoplasm. The catalysed reaction is L-threonine + NAD(+) = (2S)-2-amino-3-oxobutanoate + NADH + H(+). It functions in the pathway amino-acid degradation; L-threonine degradation via oxydo-reductase pathway; glycine from L-threonine: step 1/2. Its function is as follows. Catalyzes the NAD(+)-dependent oxidation of L-threonine to 2-amino-3-ketobutyrate. The protein is L-threonine 3-dehydrogenase of Rhizobium etli (strain CIAT 652).